The following is a 243-amino-acid chain: Probable transcriptional regulatory protein Smlt3713 (243 aa).

The protein belongs to the TACO1 family.

It is found in the cytoplasm. The protein is Probable transcriptional regulatory protein Smlt3713 of Stenotrophomonas maltophilia (strain K279a).